A 181-amino-acid chain; its full sequence is MLRGAVARRYAQALYEIAQEKNALEAMEQELKGVAEAIEGTRELQKVLYHPQVLPGEKKNLLKALFTDKVSDETLNFLGLVVDKRRENYIAGIAAEFSVLANEARGKVAAEVTTAIEIDEKQKQELVKVASRMAGKEVEPTFGVDPSLIGGVVVRIGSKVIDGSIKTRLATIKSRLMSKTS.

The protein belongs to the ATPase delta chain family. In terms of assembly, F-type ATPases have 2 components, F(1) - the catalytic core - and F(0) - the membrane proton channel. F(1) has five subunits: alpha(3), beta(3), gamma(1), delta(1), epsilon(1). F(0) has three main subunits: a(1), b(2) and c(10-14). The alpha and beta chains form an alternating ring which encloses part of the gamma chain. F(1) is attached to F(0) by a central stalk formed by the gamma and epsilon chains, while a peripheral stalk is formed by the delta and b chains.

It localises to the cell membrane. F(1)F(0) ATP synthase produces ATP from ADP in the presence of a proton or sodium gradient. F-type ATPases consist of two structural domains, F(1) containing the extramembraneous catalytic core and F(0) containing the membrane proton channel, linked together by a central stalk and a peripheral stalk. During catalysis, ATP synthesis in the catalytic domain of F(1) is coupled via a rotary mechanism of the central stalk subunits to proton translocation. In terms of biological role, this protein is part of the stalk that links CF(0) to CF(1). It either transmits conformational changes from CF(0) to CF(1) or is implicated in proton conduction. This is ATP synthase subunit delta from Desulforamulus reducens (strain ATCC BAA-1160 / DSM 100696 / MI-1) (Desulfotomaculum reducens).